An 89-amino-acid polypeptide reads, in one-letter code: UPF0297 protein SUB1776 (89 aa).

The protein belongs to the UPF0297 family.

This Streptococcus uberis (strain ATCC BAA-854 / 0140J) protein is UPF0297 protein SUB1776.